Reading from the N-terminus, the 83-residue chain is Large ribosomal subunit protein eL14 (83 aa).

It belongs to the eukaryotic ribosomal protein eL14 family.

The polypeptide is Large ribosomal subunit protein eL14 (Thermococcus onnurineus (strain NA1)).